A 131-amino-acid polypeptide reads, in one-letter code: Small ribosomal subunit protein uS8 (131 aa).

The protein belongs to the universal ribosomal protein uS8 family. In terms of assembly, part of the 30S ribosomal subunit. Contacts proteins S5 and S12.

In terms of biological role, one of the primary rRNA binding proteins, it binds directly to 16S rRNA central domain where it helps coordinate assembly of the platform of the 30S subunit. This Nitrosomonas europaea (strain ATCC 19718 / CIP 103999 / KCTC 2705 / NBRC 14298) protein is Small ribosomal subunit protein uS8.